A 128-amino-acid polypeptide reads, in one-letter code: MYDNLKSLGITNPEEIDRYSLRQEANNDILKIYFQKDRGEFFAKSVKFKYPRQRKTVVADGIGQGYKEVQEISPNLRYVIDELDQICQRDRSELDLKRKILDDLRHLESVVANKISEIEADLDKLTRK.

It belongs to the UPF0325 family.

This chain is UPF0325 protein YaeH, found in Salmonella agona (strain SL483).